The sequence spans 689 residues: Protein CFAP20DC (689 aa).

Disordered regions lie at residues 143 to 179, 217 to 236, 241 to 262, 333 to 424, and 583 to 660; these read GPPPLSGRRSNMRISSETVRSVGSKNNRSCQPSTVEK, LPIMHPHPPQEPSADKNNNR, LKSTSRERTETPSGNSSGNNTN, SKES…PSEL, and SIST…LSVE. The span at 150-176 shows a compositional bias: polar residues; that stretch reads RRSNMRISSETVRSVGSKNNRSCQPST. Over residues 343 to 359 the composition is skewed to polar residues; that stretch reads EESQSVPKDIFTFSSRP. Residues 394–405 are compositionally biased toward acidic residues; it reads SEDDFYGGDSSE. The segment covering 411–421 has biased composition (polar residues); the sequence is IQGSRGPTTGP. Low complexity predominate over residues 583–593; sequence SISTSSDDTTT.

The polypeptide is Protein CFAP20DC (CFAP20DC) (Macaca fascicularis (Crab-eating macaque)).